A 187-amino-acid polypeptide reads, in one-letter code: Transmembrane protein 11-A, mitochondrial (187 aa).

Transmembrane regions (helical) follow at residues 79–95 and 102–119; these read TAVLSGTACLLTPLALP and VSLPAGVLSLACSTLYGI.

Belongs to the TMEM11 family.

It localises to the mitochondrion inner membrane. Functionally, plays a role in mitochondrial morphogenesis. The chain is Transmembrane protein 11-A, mitochondrial (tmem11-a) from Xenopus laevis (African clawed frog).